Here is a 120-residue protein sequence, read N- to C-terminus: uncharacterized protein (120 aa).

Positions 1–19 (MKKIVCAVVALLLTLPAWA) are cleaved as a signal peptide.

This is an uncharacterized protein from Salmonella typhimurium (strain LT2 / SGSC1412 / ATCC 700720).